We begin with the raw amino-acid sequence, 104 residues long: Large ribosomal subunit protein uL24 (104 aa).

The protein belongs to the universal ribosomal protein uL24 family. Part of the 50S ribosomal subunit.

Functionally, one of two assembly initiator proteins, it binds directly to the 5'-end of the 23S rRNA, where it nucleates assembly of the 50S subunit. One of the proteins that surrounds the polypeptide exit tunnel on the outside of the subunit. The polypeptide is Large ribosomal subunit protein uL24 (Photobacterium profundum (strain SS9)).